Here is a 256-residue protein sequence, read N- to C-terminus: Trans-aconitate 2-methyltransferase (256 aa).

The protein belongs to the methyltransferase superfamily. Tam family.

The protein resides in the cytoplasm. It catalyses the reaction trans-aconitate + S-adenosyl-L-methionine = (E)-3-(methoxycarbonyl)pent-2-enedioate + S-adenosyl-L-homocysteine. Functionally, catalyzes the S-adenosylmethionine monomethyl esterification of trans-aconitate. The sequence is that of Trans-aconitate 2-methyltransferase from Agrobacterium fabrum (strain C58 / ATCC 33970) (Agrobacterium tumefaciens (strain C58)).